Reading from the N-terminus, the 601-residue chain is DNA ligase (601 aa).

D258 provides a ligand contact to ATP. K260 (N6-AMP-lysine intermediate) is an active-site residue. Residues R265, R280, E310, F350, R427, and K433 each contribute to the ATP site. Residues 568–601 (DKSPEDATTTDEILEMYNKQPKKKIESPPIDESV) are disordered.

Belongs to the ATP-dependent DNA ligase family. It depends on Mg(2+) as a cofactor.

The enzyme catalyses ATP + (deoxyribonucleotide)n-3'-hydroxyl + 5'-phospho-(deoxyribonucleotide)m = (deoxyribonucleotide)n+m + AMP + diphosphate.. DNA ligase that seals nicks in double-stranded DNA during DNA replication, DNA recombination and DNA repair. The protein is DNA ligase of Saccharolobus islandicus (strain Y.G.57.14 / Yellowstone #1) (Sulfolobus islandicus).